Reading from the N-terminus, the 446-residue chain is Probable beta-1,4-xylosyltransferase IRX9L (446 aa).

The disordered stretch occupies residues 1-26; that stretch reads MSRRNAGAMQREGSVKDWEEFDPSPS. Residues 1 to 85 lie on the Cytoplasmic side of the membrane; it reads MSRRNAGAMQ…SRSKGMSLKR (85 aa). A helical; Signal-anchor for type II membrane protein membrane pass occupies residues 86–106; sequence AMLQLLVCFMVGIFIGFTPPF. The Lumenal segment spans residues 107 to 446; it reads SVDLPGKIAS…RNLDAVVPIT (340 aa). Asn185, Asn258, Asn361, and Asn411 each carry an N-linked (GlcNAc...) asparagine glycan.

The protein belongs to the glycosyltransferase 43 family.

The protein localises to the golgi apparatus membrane. Probable beta-1,4-xylosyltransferase involved in xylan biosynthesis in cell walls. The polypeptide is Probable beta-1,4-xylosyltransferase IRX9L (Oryza sativa subsp. japonica (Rice)).